The following is a 159-amino-acid chain: Putative pre-16S rRNA nuclease (159 aa).

Belongs to the YqgF nuclease family.

Its subcellular location is the cytoplasm. In terms of biological role, could be a nuclease involved in processing of the 5'-end of pre-16S rRNA. The protein is Putative pre-16S rRNA nuclease of Synechococcus sp. (strain JA-3-3Ab) (Cyanobacteria bacterium Yellowstone A-Prime).